An 855-amino-acid polypeptide reads, in one-letter code: MFHVEEESSGGDGSEIDEEFGGDDSTTSLSRWVFDEKDDYEVNEDYDDDGYDEHNHPEMDSDEEDDNVEQRLIRTSPAVDSFDVDALEIPGTQKNEIEDTGIGKKLILALQTLGVVFGDIGTSPLYTFTVMFRRSPINDKEDIIGALSLVIYTLILIPLVKYVHFVLWANDDGEGGTFALYSLICRHANVSLIPNQLPSDARISGFGLKVPSPELERSLIIKERLEASMALKKLLLILVLAGTAMVIADAVVTPAMSVMSAIGGLKVGVGVIEQDQVVVISVSFLVILFSVQKYGTSKLGLVLGPALLLWFFCLAGIGIYNLVKYDSSVFKAFNPAYIYFFFKRNSVNAWYALGGCVLCATGSEAMFADLSYFSVHSIQLTFILLVLPCLLLGYLGQAAYLSENFSAAGDAFFSSVPSSLFWPVFLISNVAALIASRAMTTATFTCIKQSIALGCFPRLKIIHTSKKFIGQIYIPVLNWSLLVVCLIVVCSTSNIFAIGNAYGIAELGIMMTTTILVTLIMLLIWQTNIIVVSMFAIVSLIVELVFFSSVCSSVADGSWIILVFATIMFLIMFVWNYGSKLKYETEVQKKLPMDLLRELGSNLGTIRAPGIGLLYNELAKGVPAIFGHFLTTLPAIHSMVIFVCIKYVPVPSVPQTERFLFRRVCPRSYHLFRCVARYGYKDVRKESHQAFEQILIESLEKFIRKEAQERALESDGDHNDTDSEDDTTLSRVLIAPNGSVYSLGVPLLAEHMNSSNKRPMERRKASIDFGAGPSSALDVEQSLEKELSFIHKAKESGVVYLLGHGDIRATKDSWFLKKLVINYLYAFLRKNSRRGITNLSVPHTHLMQVGMTYMV.

The tract at residues 1–67 is disordered; it reads MFHVEEESSG…EMDSDEEDDN (67 aa). The Cytoplasmic segment spans residues 1-105; it reads MFHVEEESSG…EIEDTGIGKK (105 aa). Over residues 36–51 the composition is skewed to acidic residues; the sequence is EKDDYEVNEDYDDDGY. A helical membrane pass occupies residues 106 to 126; sequence LILALQTLGVVFGDIGTSPLY. Residues 127–142 lie on the Extracellular side of the membrane; that stretch reads TFTVMFRRSPINDKED. Residues 143 to 163 form a helical membrane-spanning segment; sequence IIGALSLVIYTLILIPLVKYV. Topologically, residues 164 to 233 are cytoplasmic; the sequence is HFVLWANDDG…RLEASMALKK (70 aa). The chain crosses the membrane as a helical span at residues 234 to 254; that stretch reads LLLILVLAGTAMVIADAVVTP. Residues 255-268 are Extracellular-facing; sequence AMSVMSAIGGLKVG. The helical transmembrane segment at 269–289 threads the bilayer; it reads VGVIEQDQVVVISVSFLVILF. Residues 290 to 298 are Cytoplasmic-facing; the sequence is SVQKYGTSK. The helical transmembrane segment at 299 to 319 threads the bilayer; the sequence is LGLVLGPALLLWFFCLAGIGI. Topologically, residues 320-346 are extracellular; sequence YNLVKYDSSVFKAFNPAYIYFFFKRNS. Residues 347–367 form a helical membrane-spanning segment; the sequence is VNAWYALGGCVLCATGSEAMF. The Cytoplasmic portion of the chain corresponds to 368–379; it reads ADLSYFSVHSIQ. The helical transmembrane segment at 380 to 400 threads the bilayer; sequence LTFILLVLPCLLLGYLGQAAY. Residues 401–415 are Extracellular-facing; that stretch reads LSENFSAAGDAFFSS. Residue Asn-404 is glycosylated (N-linked (GlcNAc...) asparagine). The helical transmembrane segment at 416–436 threads the bilayer; it reads VPSSLFWPVFLISNVAALIAS. Topologically, residues 437–467 are cytoplasmic; that stretch reads RAMTTATFTCIKQSIALGCFPRLKIIHTSKK. The helical transmembrane segment at 468-488 threads the bilayer; sequence FIGQIYIPVLNWSLLVVCLIV. Residues 489–503 are Extracellular-facing; the sequence is VCSTSNIFAIGNAYG. Residues 504–524 form a helical membrane-spanning segment; it reads IAELGIMMTTTILVTLIMLLI. The Cytoplasmic segment spans residues 525 to 528; that stretch reads WQTN. A helical membrane pass occupies residues 529 to 549; that stretch reads IIVVSMFAIVSLIVELVFFSS. The Extracellular portion of the chain corresponds to 550-553; it reads VCSS. The chain crosses the membrane as a helical span at residues 554–574; it reads VADGSWIILVFATIMFLIMFV. Over 575–855 the chain is Cytoplasmic; sequence WNYGSKLKYE…LMQVGMTYMV (281 aa). A Phosphoserine modification is found at Ser-766.

Belongs to the HAK/KUP transporter (TC 2.A.72.3) family.

It is found in the cell membrane. Probable potassium transporter. This Arabidopsis thaliana (Mouse-ear cress) protein is Potassium transporter 13 (POT13).